The primary structure comprises 239 residues: Caffeoyl-CoA O-methyltransferase 1 (239 aa).

Substrate is bound at residue Lys-13. S-adenosyl-L-methionine contacts are provided by residues Thr-55, Glu-77, 79–80 (GV), Ser-85, Asp-103, and Ala-132. Residue Asp-155 participates in substrate binding. Residue Asp-155 participates in a divalent metal cation binding. Asp-157 is a binding site for S-adenosyl-L-methionine. Asp-181 and Asn-182 together coordinate a divalent metal cation. Asn-186 serves as a coordination point for substrate.

Belongs to the class I-like SAM-binding methyltransferase superfamily. Cation-dependent O-methyltransferase family. CCoAMT subfamily. In terms of assembly, monomer. Mg(2+) serves as cofactor. As to expression, mostly expressed in the bottom and middle parts of the stems.

The enzyme catalyses (E)-caffeoyl-CoA + S-adenosyl-L-methionine = (E)-feruloyl-CoA + S-adenosyl-L-homocysteine + H(+). It participates in aromatic compound metabolism; phenylpropanoid biosynthesis. Methylates caffeoyl-CoA to feruloyl-CoA and 5-hydroxyferuloyl-CoA to sinapoyl-CoA. Plays a role in the synthesis of feruloylated polysaccharides. Involved in the reinforcement of the plant cell wall. Also involved in the responding to wounding or pathogen challenge by the increased formation of cell wall-bound ferulic acid polymers. This Nicotiana tabacum (Common tobacco) protein is Caffeoyl-CoA O-methyltransferase 1 (CCOAOMT1).